The chain runs to 317 residues: Apolipoprotein E (317 aa).

A signal peptide spans 1 to 18 (MKALWVALVVTLLAGCRA). 8 consecutive repeat copies span residues 79–100 (ALME…EQLS), 101–122 (PVAQ…ARLG), 123–144 (TDME…AMLG), 145–166 (QTTD…KRLL), 167–188 (RDAE…EGAE), 189–210 (RSVS…LGTA), 211–232 (TTST…QKLR), and 233–254 (GRLE…EQLE). The tract at residues 79–254 (ALMEETMKEV…RLDKMREQLE (176 aa)) is 8 X 22 AA approximate tandem repeats. The residue at position 142 (Met142) is a Methionine sulfoxide. Residues 157–167 (HLRKLRKRLLR) are LDL and other lipoprotein receptors binding. 161–164 (LRKR) lines the heparin pocket. Positions 209–289 (TATTSTLGSQ…GWFQPLVEDL (81 aa)) are lipid-binding and lipoprotein association. Residue Thr211 is glycosylated (O-linked (GalNAc...) threonine). 228–235 (GQKLRGRL) is a binding site for heparin. The homooligomerization stretch occupies residues 265–317 (SQMRLQAETFQARLKGWFQPLVEDLQRQWAGLVEKVQQLAVGTTPTPAASKNQ). Residues 277-289 (RLKGWFQPLVEDL) form a specificity for association with VLDL region. Thr310 carries an O-linked (GalNAc...) threonine glycan.

This sequence belongs to the apolipoprotein A1/A4/E family. Homotetramer. May interact with ABCA1; functionally associated with ABCA1 in the biogenesis of HDLs. May interact with APP/A4 amyloid-beta peptide; the interaction is extremely stable in vitro but its physiological significance is unclear. May interact with MAPT. May interact with MAP2. In the cerebrospinal fluid, interacts with secreted SORL1. Interacts with PMEL; this allows the loading of PMEL luminal fragment on ILVs to induce fibril nucleation. In terms of processing, APOE exists as multiple glycosylated and sialylated glycoforms within cells and in plasma. The extent of glycosylation and sialylation are tissue and context specific. Glycated in plasma VLDL. Post-translationally, phosphorylated by FAM20C in the extracellular medium.

The protein localises to the secreted. Its subcellular location is the extracellular space. It is found in the extracellular matrix. The protein resides in the extracellular vesicle. It localises to the endosome. The protein localises to the multivesicular body. In terms of biological role, APOE is an apolipoprotein, a protein associating with lipid particles, that mainly functions in lipoprotein-mediated lipid transport between organs via the plasma and interstitial fluids. APOE is a core component of plasma lipoproteins and is involved in their production, conversion and clearance. Apolipoproteins are amphipathic molecules that interact both with lipids of the lipoprotein particle core and the aqueous environment of the plasma. As such, APOE associates with chylomicrons, chylomicron remnants, very low density lipoproteins (VLDL) and intermediate density lipoproteins (IDL) but shows a preferential binding to high-density lipoproteins (HDL). It also binds a wide range of cellular receptors including the LDL receptor/LDLR and the very low-density lipoprotein receptor/VLDLR that mediate the cellular uptake of the APOE-containing lipoprotein particles. Finally, APOE also has a heparin-binding activity and binds heparan-sulfate proteoglycans on the surface of cells, a property that supports the capture and the receptor-mediated uptake of APOE-containing lipoproteins by cells. This is Apolipoprotein E (APOE) from Camelus dromedarius (Dromedary).